Here is a 246-residue protein sequence, read N- to C-terminus: Dof zinc finger protein DOF4.7 (246 aa).

Polar residues-rich tracts occupy residues 1–12 and 27–37; these read MMTSSHQSNTTG and QINNKEPSPAT. Positions 1-39 are disordered; sequence MMTSSHQSNTTGFKPRRIKTTAKPPRQINNKEPSPATQP. The segment at 41–95 adopts a Dof-type zinc-finger fold; that stretch reads LKCPRCDSVNTKFCYYNNYSLSQPRHYCKNCRRYWTRGGALRNVPIGGSTRNKNK. Zn(2+) is bound by residues C43, C46, C68, and C71. Positions 216–235 are disordered; that stretch reads GGATSGNHEDNDDGEGNLGN.

Interacts with ZFP2. Highly expressed at the base of all organs of the flower, especially in the abscission zone (AZ) of petals, stamens and sepals. Expressed at low levels in sepals, filaments, stigmatic papillae, tips of young siliques, and at the base of pedicels and leaf trichomes.

The protein resides in the nucleus. In terms of biological role, transcription factor that binds specifically to a 5'-AA[AG]G-3' consensus core sequence. Involved in the negative regulation of floral organ abscission by binding to the typical DOF 5'-AAAG-3' sequences in the promoter of ADPG2/PGAZAT, and by down-regulating its expression. ADPG2/PGAZAT is an abscission-related and cell wall hydrolyzing polygalacturonase. May act through the interaction with ZFP2, an abscission-related transcription factor. The polypeptide is Dof zinc finger protein DOF4.7 (Arabidopsis thaliana (Mouse-ear cress)).